Here is an 896-residue protein sequence, read N- to C-terminus: MDQQMALTWGLCYMALVALCWGHGVTEAEETVPLKTLQCYNDYTNHIICSWADTEDAQGLINMTLYHQLEKKQPVSCELSEELMWSECPSSHRCVPRRCVIPYTRFSITNEDYYSFRPDSDLGIQLMVPLAQNVQPPLPKNVSISSSEDRFLLEWSVSLGDAQVSWLSSKDIEFEVAYKRLQDSWEDAYSLHTSKFQVNFEPKLFLPNSIYAARVRTRLSPGSSLSGRPSRWSPEVHWDSQPGDKAQPQNLQCFFDGIQSLHCSWEVWTQTTGSVSFGLFYRPSPVAPEEKCSPVVKEPPGASVYTRYHCSLPVPEPSAHSQYTVSVKHLEQGKFIMSYNHIQMEPPTLNLTKNRDSYSLHWETQKMAYSFIEHTFQVQYKKKSDSWEDSKTENLDRAHSMDLSQLEPDTSYCARVRVKPISNYDGIWSKWSEEYTWKTDWVMPTLWIVLILVFLILTLLLILRFGCVSVYRTYRKWKEKIPNPSKSLLFQDGGKGLWPPGSMAAFATKNPALQGPQSRLLAEQQGESYAHLEDNNVSPLTIEDPNIIRVPPSGPDTTPAASSESTEQLPNVQVEGPTPNRPRKQLPSFDFNGPYLGPPQSHSLPDLPDQLGSPQVGGSLKPALPGSLEYMCLPPGGQAQLVPLSQVMGQGQAMDVQCGSSLETSGSPSVEPKENPPVELSMEEQEARDNPVTLPISSGGPEGSMMASDYVTPGDPVLTLPTGPLSTSLGPSLGLPSAQSPSLCLKLPRVPSGSPALGPPGFEDYVELPPSVSQAAKSPPGHPAPPVASSPTVIPGEPREEVGPASPHPEGLLVLQQVGDYCFLPGLGPGSLSPHSKPPSPSLCSETEDLVQDLSVKKFPYQPMPQAPAIQFFKSLKHQDYLSLPPWDNSQSGKVC.

Positions M1–G22 are cleaved as a signal peptide. Residues H23 to W441 are Extracellular-facing. Residues C39 and C49 are joined by a disulfide bond. The N-linked (GlcNAc...) asparagine glycan is linked to N62. 2 cysteine pairs are disulfide-bonded: C77–C99 and C88–C94. Residues P136–G243 enclose the Fibronectin type-III 1 domain. N141 carries N-linked (GlcNAc...) asparagine glycosylation. Residues S220–S233 are compositionally biased toward low complexity. Residues S220–G243 are disordered. 2 cysteine pairs are disulfide-bonded: C253–C263 and C292–C310. The Fibronectin type-III 2 domain occupies Q343 to T439. The N-linked (GlcNAc...) asparagine glycan is linked to N350. The WSXWS motif signature appears at W428–S432. A helical membrane pass occupies residues V442–L463. Over R464–C896 the chain is Cytoplasmic. The Box 1 motif signature appears at W477 to S485. 2 disordered regions span residues E543–L620 and C658–L725. 2 stretches are compositionally biased toward polar residues: residues P555–N571 and C658–P668. The segment covering P716 to L725 has biased composition (low complexity). S752 and S754 each carry phosphoserine. Residue Y765 is modified to Phosphotyrosine. The tract at residues S771–E810 is disordered.

This sequence belongs to the type I cytokine receptor family. Type 4 subfamily. Heterodimer of an alpha and a beta subunit. The beta subunit is common to the IL3, IL5 and GM-CSF receptors. The signaling GM-CSF receptor complex is a dodecamer of two head-to-head hexamers of two alpha, two beta, and two ligand subunits. Interacts with TMEM102; this interaction occurs preferentially in the absence of CSF2. Interacts with FCER1G; this interaction is direct. Interacts with LYN. Post-translationally, may be phosphorylated by LYN.

It is found in the membrane. Its function is as follows. High affinity receptor for interleukin-3, interleukin-5 and granulocyte-macrophage colony-stimulating factor. This chain is Cytokine receptor common subunit beta (Csf2rb), found in Mus musculus (Mouse).